The following is a 367-amino-acid chain: Hyaluronidase (367 aa).

2 cysteine pairs are disulfide-bonded: Cys48/Cys337 and Cys214/Cys226. Asn108 is a glycosylation site (N-linked (GlcNAc...) asparagine). The active-site Proton donor is the Glu138. N-linked (GlcNAc...) asparagine glycosylation occurs at Asn354.

This sequence belongs to the glycosyl hydrolase 56 family.

It carries out the reaction Random hydrolysis of (1-&gt;4)-linkages between N-acetyl-beta-D-glucosamine and D-glucuronate residues in hyaluronate.. May play a role in reproduction. The sequence is that of Hyaluronidase from Polistes annularis (Paper wasp).